The following is a 209-amino-acid chain: Large ribosomal subunit protein uL3 (209 aa).

Positions 125–148 (RHGQSRGPMAHGSRYHRRPGSMGP) are disordered.

The protein belongs to the universal ribosomal protein uL3 family. As to quaternary structure, part of the 50S ribosomal subunit. Forms a cluster with proteins L14 and L19.

In terms of biological role, one of the primary rRNA binding proteins, it binds directly near the 3'-end of the 23S rRNA, where it nucleates assembly of the 50S subunit. The sequence is that of Large ribosomal subunit protein uL3 from Lysinibacillus sphaericus (strain C3-41).